Reading from the N-terminus, the 84-residue chain is Large ribosomal subunit protein bL27 (84 aa).

A disordered region spans residues 1–25; the sequence is MAHKKGAGSTKNGRDSKPKMLGVKR.

Belongs to the bacterial ribosomal protein bL27 family.

In Dehalococcoides mccartyi (strain ATCC BAA-2266 / KCTC 15142 / 195) (Dehalococcoides ethenogenes (strain 195)), this protein is Large ribosomal subunit protein bL27.